A 193-amino-acid polypeptide reads, in one-letter code: dCTP deaminase (193 aa).

Residues 110 to 115 (RSSLAR), D128, 136 to 138 (VLE), Y171, K178, and Q182 contribute to the dCTP site. The active-site Proton donor/acceptor is the E138. Residues 174 to 193 (RKNAKYKDQQEAVASRISQD) are disordered.

It belongs to the dCTP deaminase family. Homotrimer.

The catalysed reaction is dCTP + H2O + H(+) = dUTP + NH4(+). Its pathway is pyrimidine metabolism; dUMP biosynthesis; dUMP from dCTP (dUTP route): step 1/2. Its function is as follows. Catalyzes the deamination of dCTP to dUTP. The chain is dCTP deaminase from Shewanella sp. (strain W3-18-1).